A 459-amino-acid chain; its full sequence is MAATSSTSSQSFDIELDIIGQQPPLLSIYTQISLVYPVSDPSQYPTIVSTLEEGLKRLSQTFPWVAGQVKTEGISEGNTGTSKIIPYEETPRLVVKDLRDDSSAPTIEGLRKAGFPLEMFDENVVAPRKTLAIGPGNGPNDPKPVLLLQLNFIKGGLILTVNGQHGAMDMTGQDAIIRLLSKACRNESFTEEEISAMNLDRKTVVPLLENYKVGPELDHQIAKPAPAGDAPPAPAKATWAFFSFTPKALSELKDAATKTLDASSKFVSTDDALSAFIWQSTSRVRLARLDASTPTEFCRAVDMRGPMGVSSTYPGLLQNMTYHDSTVAEIANEPLGATASRLRSELNSDRLRRRTQALATYMHGLPDKSSVSLTADANPSSSIMLSSWAKVGCWEYDFGFGLGKPESVRRPRFEPFESLMYFMPKKPDGEFTASISLRDEDMERLKADEEWTKYAKYIG.

Residues Asp-218 and Ile-221 each coordinate Ca(2+). CoA is bound by residues Lys-253, 266–269 (FVST), Asp-302, Gln-318, and Arg-343. Position 376 (Asp-376) interacts with Ca(2+). Residues Ser-386 and Lys-390 each coordinate CoA. Glu-449 contacts Ca(2+).

This sequence belongs to the trichothecene 3-O-acetyltransferase family.

Its pathway is sesquiterpene biosynthesis; trichothecene biosynthesis. Its function is as follows. 3-O-acetyltransferase involved in the biosynthesis of trichothecenes, a very large family of chemically related bicyclic sesquiterpene compounds acting as mycotoxins, including T2-toxin. The biosynthesis of trichothecenes begins with the cyclization of farnesyl diphosphate to trichodiene and is catalyzed by the trichodiene synthase TRI5. Trichodiene undergoes a series of oxygenations catalyzed by the cytochrome P450 monooxygenase TRI4. TRI4 controls the addition of four oxygens at C-2, C-3, C-11, and the C-12, C-13-epoxide to form the intermediate isotrichotriol. Isotrichotriol then undergoes a non-enzymatic isomerization and cyclization to form isotrichodermol. During this process, the oxygen at the C-2 position becomes the pyran ring oxygen and the hydroxyl group at C-11 is lost. More complex type A trichothecenes are built by modifying isotrichodermol through a series of paired hydroxylation and acetylation or acylation steps. Isotrichodermol is converted to isotrichodermin by the acetyltransferase TRI101. TRI101 encodes a C-3 transacetylase that acts as a self-protection or resistance factor during biosynthesis and that the presence of a free C-3 hydroxyl group is a key component of Fusarium trichothecene phytotoxicity. A second hydroxyl group is added to C-15 by the trichothecene C-15 hydroxylase TRI11, producing 15-decalonectrin, which is then acetylated by TRI3, producing calonectrin. A third hydroxyl group is added at C-4 by the cytochrome P450 monooxygenase TRI13, converting calonectrin to 3,15-diacetoxyspirpenol, which is subsequently acetylated bythe acetyltransferase TRI7. A fourth hydroxyl group is added to C-8 by the cytochrome P450 monooxygenase TRI1, followed by the addition of an isovaleryl moiety by TRI16. Finally, the acetyl group is removed from the C-3 position by the trichothecene C-3 esterase TRI8 to produce T-2 toxin. The sequence is that of Trichothecene 3-O-acetyltransferase TRI101 from Fusarium sporotrichioides.